Consider the following 392-residue polypeptide: Lipid-A-disaccharide synthase (392 aa).

Belongs to the LpxB family.

The catalysed reaction is a lipid X + a UDP-2-N,3-O-bis[(3R)-3-hydroxyacyl]-alpha-D-glucosamine = a lipid A disaccharide + UDP + H(+). It functions in the pathway bacterial outer membrane biogenesis; LPS lipid A biosynthesis. Functionally, condensation of UDP-2,3-diacylglucosamine and 2,3-diacylglucosamine-1-phosphate to form lipid A disaccharide, a precursor of lipid A, a phosphorylated glycolipid that anchors the lipopolysaccharide to the outer membrane of the cell. This chain is Lipid-A-disaccharide synthase, found in Syntrophotalea carbinolica (strain DSM 2380 / NBRC 103641 / GraBd1) (Pelobacter carbinolicus).